Consider the following 636-residue polypeptide: DNA mismatch repair protein MutL (636 aa).

A disordered region spans residues R362–E393. Over residues K363–E393 the composition is skewed to basic and acidic residues.

The protein belongs to the DNA mismatch repair MutL/HexB family.

Its function is as follows. This protein is involved in the repair of mismatches in DNA. It is required for dam-dependent methyl-directed DNA mismatch repair. May act as a 'molecular matchmaker', a protein that promotes the formation of a stable complex between two or more DNA-binding proteins in an ATP-dependent manner without itself being part of a final effector complex. This Lactobacillus helveticus (strain DPC 4571) protein is DNA mismatch repair protein MutL.